A 535-amino-acid chain; its full sequence is MAFPQTPNRLIRPRRTSRGIAISAGGLAVLLGALDTYVVVSIVTDIMRDVGIAVNQIQRVTPIITGYLLGYIAAMPLLGRASDRFGRKLLIQISLAGFALGSVITALATNLDVLVAGRVIQGAASGALLPVTLALAADLWATHKRAAVLGGVGAAQELGAVLGPIYGIFVVWLFHHWQAVFWVNVPLALIAMVLIHISLPPRVRTEEPQRVDVTGGLLLALALGLATIGLYNAEPDGKQVLPEYGPPLIIGAVIAAVAFLVWERFARTRLLDPAGVRFRPFLIALLVSLVTGGALMVTLVNVELFGQGVLGLDQDEAVFLLARFLIALPVGALLGGWIATRVGDRAVTAVGLLIAAGGFYLIAQWPADVLESRHDLGFVSLPTLDTDLAIAGFGLGLVIAPLTSAALRVVPAAQHGIASAAVVVARMIGMLIGIAALSAWGLYRFNQYLKEQLAALPPAPADFPGGQMAGQMMRLRTATVQAYVLQYGEIFAITAGLCVFGAVLGLFIAGRREHAEESADAVDGVSNARDRAPSA.

At 1 to 18 (MAFPQTPNRLIRPRRTSR) the chain is on the cytoplasmic side. Residues 19-39 (GIAISAGGLAVLLGALDTYVV) form a helical membrane-spanning segment. Topologically, residues 40–60 (VSIVTDIMRDVGIAVNQIQRV) are periplasmic. Residues 61 to 82 (TPIITGYLLGYIAAMPLLGRAS) form a helical membrane-spanning segment. Over 83–86 (DRFG) the chain is Cytoplasmic. Residues 87 to 107 (RKLLIQISLAGFALGSVITAL) traverse the membrane as a helical segment. The Periplasmic portion of the chain corresponds to 108-111 (ATNL). The helical transmembrane segment at 112 to 136 (DVLVAGRVIQGAASGALLPVTLALA) threads the bilayer. The Cytoplasmic portion of the chain corresponds to 137 to 145 (ADLWATHKR). A helical membrane pass occupies residues 146–167 (AAVLGGVGAAQELGAVLGPIYG). Residues 168–177 (IFVVWLFHHW) are Periplasmic-facing. The chain crosses the membrane as a helical span at residues 178 to 198 (QAVFWVNVPLALIAMVLIHIS). Residues 199 to 212 (LPPRVRTEEPQRVD) are Cytoplasmic-facing. The helical transmembrane segment at 213–230 (VTGGLLLALALGLATIGL) threads the bilayer. Residues 231–243 (YNAEPDGKQVLPE) lie on the Periplasmic side of the membrane. A helical transmembrane segment spans residues 244 to 263 (YGPPLIIGAVIAAVAFLVWE). The Cytoplasmic portion of the chain corresponds to 264–278 (RFARTRLLDPAGVRF). The chain crosses the membrane as a helical span at residues 279 to 300 (RPFLIALLVSLVTGGALMVTLV). Residues 301–320 (NVELFGQGVLGLDQDEAVFL) are Periplasmic-facing. The next 2 membrane-spanning stretches (helical) occupy residues 321 to 343 (LARF…TRVG) and 344 to 364 (DRAV…LIAQ). The Periplasmic portion of the chain corresponds to 365 to 384 (WPADVLESRHDLGFVSLPTL). Residues 373-382 (RHDLGFVSLP) are beta-hairpin. Residues 385–407 (DTDLAIAGFGLGLVIAPLTSAAL) traverse the membrane as a helical segment. Residues 408 to 415 (RVVPAAQH) lie on the Cytoplasmic side of the membrane. The chain crosses the membrane as a helical span at residues 416 to 440 (GIASAAVVVARMIGMLIGIAALSAW). Topologically, residues 441 to 487 (GLYRFNQYLKEQLAALPPAPADFPGGQMAGQMMRLRTATVQAYVLQY) are periplasmic. The chain crosses the membrane as a helical span at residues 488–507 (GEIFAITAGLCVFGAVLGLF). The Cytoplasmic segment spans residues 508-535 (IAGRREHAEESADAVDGVSNARDRAPSA).

Belongs to the major facilitator superfamily. P55 (TC 2.A.1.3.34) family.

The protein resides in the cell inner membrane. In association with lipoprotein LprG transports triacylglycerides (TAG) across the inner cell membrane, probably transfering them to lipoprotein LprG in the periplasm. TAG probably regulates lipid metabolism and growth regulation and plays a structural role in the outer membrane. Mutagenesis and molecular modeling suggests TAG (and maybe other lipids) enters the central cavity of the P55 transporter from within the cell inner membrane via clefts on the cytoplasmic face of P55 between TM5-TM8 and TM2-TM11. From there the lipid is probably transferred to the hydrophobic cavity of LprG. The lprG-MHAS_02167/C731_2107 operon complements the vancomycin sensitivity of an M.smegmatis knockout of the same operon. Probably required with LprG for normal surface localization of lipoarabinomannan (LAM). In Mycolicibacterium hassiacum (strain DSM 44199 / CIP 105218 / JCM 12690 / 3849) (Mycobacterium hassiacum), this protein is Triacylglyceride transporter MHAS_02168/C731_2106.